We begin with the raw amino-acid sequence, 659 residues long: Cysteine-rich receptor-like protein kinase 18 (659 aa).

Positions 1–27 (MATKSCELVLCFFVFFVISFSAISVSA) are cleaved as a signal peptide. Gnk2-homologous domains lie at 28-131 (QTCD…NRPF) and 137-250 (MDPL…VYPF). The Extracellular portion of the chain corresponds to 28 to 287 (QTCDNTTGTF…KNDSRISGGK (260 aa)). Residues Asn-32, Asn-57, Asn-152, Asn-162, Asn-179, Asn-180, Asn-197, Asn-275, and Asn-279 are each glycosylated (N-linked (GlcNAc...) asparagine). Residues 288–308 (IAAIVVVTVVTIILVVLGFVI) form a helical membrane-spanning segment. Topologically, residues 309 to 659 (SNRRKQKQEM…EATITDVNPR (351 aa)) are cytoplasmic. Positions 339–611 (FSERNKLGKG…PTMSTIHQML (273 aa)) constitute a Protein kinase domain. Residues 345–353 (LGKGGFGEV) and Lys-367 each bind ATP. Tyr-412 bears the Phosphotyrosine mark. Asp-464 (proton acceptor) is an active-site residue. Position 468 is a phosphoserine (Ser-468). Thr-504 is subject to Phosphothreonine. Tyr-512 bears the Phosphotyrosine mark.

This sequence belongs to the protein kinase superfamily. Ser/Thr protein kinase family. CRK subfamily.

It localises to the membrane. The catalysed reaction is L-seryl-[protein] + ATP = O-phospho-L-seryl-[protein] + ADP + H(+). It carries out the reaction L-threonyl-[protein] + ATP = O-phospho-L-threonyl-[protein] + ADP + H(+). The sequence is that of Cysteine-rich receptor-like protein kinase 18 (CRK18) from Arabidopsis thaliana (Mouse-ear cress).